The sequence spans 262 residues: Tryptophan synthase alpha chain (262 aa).

Active-site proton acceptor residues include E52 and D63.

It belongs to the TrpA family. As to quaternary structure, tetramer of two alpha and two beta chains.

It carries out the reaction (1S,2R)-1-C-(indol-3-yl)glycerol 3-phosphate + L-serine = D-glyceraldehyde 3-phosphate + L-tryptophan + H2O. It functions in the pathway amino-acid biosynthesis; L-tryptophan biosynthesis; L-tryptophan from chorismate: step 5/5. The alpha subunit is responsible for the aldol cleavage of indoleglycerol phosphate to indole and glyceraldehyde 3-phosphate. The polypeptide is Tryptophan synthase alpha chain (Mycobacteroides abscessus (strain ATCC 19977 / DSM 44196 / CCUG 20993 / CIP 104536 / JCM 13569 / NCTC 13031 / TMC 1543 / L948) (Mycobacterium abscessus)).